A 601-amino-acid chain; its full sequence is A-type ATP synthase subunit A (601 aa).

235 to 242 (GGFGTGKT) contributes to the ATP binding site.

This sequence belongs to the ATPase alpha/beta chains family. As to quaternary structure, has multiple subunits with at least A(3), B(3), C, D, E, F, H, I and proteolipid K(x).

It localises to the cell membrane. The catalysed reaction is ATP + H2O + 4 H(+)(in) = ADP + phosphate + 5 H(+)(out). In terms of biological role, component of the A-type ATP synthase that produces ATP from ADP in the presence of a proton gradient across the membrane. The A chain is the catalytic subunit. The sequence is that of A-type ATP synthase subunit A from Thermofilum pendens (strain DSM 2475 / Hrk 5).